Reading from the N-terminus, the 188-residue chain is NADH-quinone oxidoreductase subunit B 1 (188 aa).

[4Fe-4S] cluster-binding residues include Cys32, Cys33, Cys98, and Cys128. Residues Val153–Ser188 are disordered. Residues Ser157 to Leu177 are compositionally biased toward low complexity.

It belongs to the complex I 20 kDa subunit family. NDH-1 is composed of 14 different subunits. Subunits NuoB, C, D, E, F, and G constitute the peripheral sector of the complex. [4Fe-4S] cluster serves as cofactor.

It localises to the cell membrane. The enzyme catalyses a quinone + NADH + 5 H(+)(in) = a quinol + NAD(+) + 4 H(+)(out). Functionally, NDH-1 shuttles electrons from NADH, via FMN and iron-sulfur (Fe-S) centers, to quinones in the respiratory chain. The immediate electron acceptor for the enzyme in this species is believed to be a menaquinone. Couples the redox reaction to proton translocation (for every two electrons transferred, four hydrogen ions are translocated across the cytoplasmic membrane), and thus conserves the redox energy in a proton gradient. In Salinispora tropica (strain ATCC BAA-916 / DSM 44818 / JCM 13857 / NBRC 105044 / CNB-440), this protein is NADH-quinone oxidoreductase subunit B 1 (nuoB1).